A 260-amino-acid chain; its full sequence is Ribosomal RNA small subunit methyltransferase J (260 aa).

Residues 125 to 126 and Asp-179 each bind S-adenosyl-L-methionine; that span reads ER. The tract at residues 234–260 is disordered; it reads IDGPKPSHALDGKSSRYDIYPKKALKP. Basic and acidic residues predominate over residues 241-254; sequence HALDGKSSRYDIYP.

It belongs to the methyltransferase superfamily. RsmJ family.

Its subcellular location is the cytoplasm. The enzyme catalyses guanosine(1516) in 16S rRNA + S-adenosyl-L-methionine = N(2)-methylguanosine(1516) in 16S rRNA + S-adenosyl-L-homocysteine + H(+). Specifically methylates the guanosine in position 1516 of 16S rRNA. The chain is Ribosomal RNA small subunit methyltransferase J from Pseudomonas fluorescens (strain SBW25).